The following is an 87-amino-acid chain: Small ribosomal subunit protein bS20 (87 aa).

The tract at residues 1-22 (MAHHKSAIKRIKQNAKKNARNR) is disordered.

It belongs to the bacterial ribosomal protein bS20 family.

Binds directly to 16S ribosomal RNA. The protein is Small ribosomal subunit protein bS20 of Pelobacter propionicus (strain DSM 2379 / NBRC 103807 / OttBd1).